Reading from the N-terminus, the 574-residue chain is Golgin subfamily A member 6-like protein 4 (574 aa).

The segment covering 1-11 has biased composition (pro residues); the sequence is MWPQPRFPPHP. 2 disordered regions span residues 1–77 and 491–552; these read MWPQ…YGEG and KELK…AAGG. Residues 51–62 are compositionally biased toward polar residues; the sequence is NGSSPDTATSGG. The stretch at 157–496 forms a coiled coil; that stretch reads SKVEQLQDET…EQQVKELKKS (340 aa). The segment covering 491–504 has biased composition (basic and acidic residues); it reads KELKKSGGAEEPRG. Residues 508 to 523 are compositionally biased toward low complexity; sequence AAAARPVAGAPVPQGA.

This sequence belongs to the GOLGA6 family.

The polypeptide is Golgin subfamily A member 6-like protein 4 (GOLGA6L4) (Homo sapiens (Human)).